Here is a 131-residue protein sequence, read N- to C-terminus: Ribonuclease VapC4 (131 aa).

The 103-residue stretch at 4–106 (IVPDTNFLIY…IVATNDKELK (103 aa)) folds into the PINc domain. D7 and D102 together coordinate Mg(2+).

This sequence belongs to the PINc/VapC protein family. Mg(2+) serves as cofactor.

Its function is as follows. Toxic component of a type II toxin-antitoxin (TA) system. An RNase. Its cognate antitoxin is VapB4. In Methanocaldococcus jannaschii (strain ATCC 43067 / DSM 2661 / JAL-1 / JCM 10045 / NBRC 100440) (Methanococcus jannaschii), this protein is Ribonuclease VapC4.